Consider the following 144-residue polypeptide: Large ribosomal subunit protein uL15 (144 aa).

Positions 1–53 (MRLNTLSPAVGAKSAPKRVGRGIGSGLGKTAGRGHKGQKSRSGGGVRPGFEGG) are disordered. 2 stretches are compositionally biased toward gly residues: residues 21-31 (RGIGSGLGKTA) and 42-52 (SGGGVRPGFEG).

This sequence belongs to the universal ribosomal protein uL15 family. In terms of assembly, part of the 50S ribosomal subunit.

In terms of biological role, binds to the 23S rRNA. This Shewanella amazonensis (strain ATCC BAA-1098 / SB2B) protein is Large ribosomal subunit protein uL15.